A 469-amino-acid polypeptide reads, in one-letter code: ATP-dependent protease ATPase subunit HslU (469 aa).

ATP contacts are provided by residues I24 and 66–71 (GVGKTE). Residues 159-179 (LFGSMNQPDEPAEEEVDQELK) are disordered. Residues D282, E347, and R419 each coordinate ATP.

The protein belongs to the ClpX chaperone family. HslU subfamily. A double ring-shaped homohexamer of HslV is capped on each side by a ring-shaped HslU homohexamer. The assembly of the HslU/HslV complex is dependent on binding of ATP.

Its subcellular location is the cytoplasm. Functionally, ATPase subunit of a proteasome-like degradation complex; this subunit has chaperone activity. The binding of ATP and its subsequent hydrolysis by HslU are essential for unfolding of protein substrates subsequently hydrolyzed by HslV. HslU recognizes the N-terminal part of its protein substrates and unfolds these before they are guided to HslV for hydrolysis. The polypeptide is ATP-dependent protease ATPase subunit HslU (Listeria innocua serovar 6a (strain ATCC BAA-680 / CLIP 11262)).